Here is a 304-residue protein sequence, read N- to C-terminus: Sulfate adenylyltransferase subunit 2 2 (304 aa).

It belongs to the PAPS reductase family. CysD subfamily. In terms of assembly, heterodimer composed of CysD, the smaller subunit, and CysN.

The catalysed reaction is sulfate + ATP + H(+) = adenosine 5'-phosphosulfate + diphosphate. The protein operates within sulfur metabolism; hydrogen sulfide biosynthesis; sulfite from sulfate: step 1/3. In terms of biological role, with CysN forms the ATP sulfurylase (ATPS) that catalyzes the adenylation of sulfate producing adenosine 5'-phosphosulfate (APS) and diphosphate, the first enzymatic step in sulfur assimilation pathway. APS synthesis involves the formation of a high-energy phosphoric-sulfuric acid anhydride bond driven by GTP hydrolysis by CysN coupled to ATP hydrolysis by CysD. The protein is Sulfate adenylyltransferase subunit 2 2 of Marinobacter nauticus (strain ATCC 700491 / DSM 11845 / VT8) (Marinobacter aquaeolei).